Consider the following 215-residue polypeptide: Probable nicotinate-nucleotide adenylyltransferase (215 aa).

This sequence belongs to the NadD family.

The catalysed reaction is nicotinate beta-D-ribonucleotide + ATP + H(+) = deamido-NAD(+) + diphosphate. It functions in the pathway cofactor biosynthesis; NAD(+) biosynthesis; deamido-NAD(+) from nicotinate D-ribonucleotide: step 1/1. Functionally, catalyzes the reversible adenylation of nicotinate mononucleotide (NaMN) to nicotinic acid adenine dinucleotide (NaAD). This chain is Probable nicotinate-nucleotide adenylyltransferase, found in Coxiella burnetii (strain Dugway 5J108-111).